Reading from the N-terminus, the 423-residue chain is Putative competence-damage inducible protein (423 aa).

Belongs to the CinA family.

In Streptococcus pyogenes serotype M1, this protein is Putative competence-damage inducible protein.